Reading from the N-terminus, the 96-residue chain is Co-chaperonin GroES (96 aa).

It belongs to the GroES chaperonin family. Heptamer of 7 subunits arranged in a ring. Interacts with the chaperonin GroEL.

The protein resides in the cytoplasm. In terms of biological role, together with the chaperonin GroEL, plays an essential role in assisting protein folding. The GroEL-GroES system forms a nano-cage that allows encapsulation of the non-native substrate proteins and provides a physical environment optimized to promote and accelerate protein folding. GroES binds to the apical surface of the GroEL ring, thereby capping the opening of the GroEL channel. The polypeptide is Co-chaperonin GroES (Acinetobacter baylyi (strain ATCC 33305 / BD413 / ADP1)).